The primary structure comprises 461 residues: Putative aldehyde dehydrogenase FUS7 (461 aa).

An NAD(+)-binding site is contributed by 220–225; it reads GSTTTG. Residues E242 and C276 contribute to the active site.

Belongs to the aldehyde dehydrogenase family.

It carries out the reaction an aldehyde + NAD(+) + H2O = a carboxylate + NADH + 2 H(+). Putative aldehyde dehydrogenase; part of the gene cluster that mediates the biosynthesis of the mycotoxin fusarin C. Within the cluster, FUS1, FUS2, FUS8 and FUS9 are sufficient for fusarin production. The other FUS cluster members are not essential for fusarin C biosynthesis. The polypeptide is Putative aldehyde dehydrogenase FUS7 (Gibberella fujikuroi (strain CBS 195.34 / IMI 58289 / NRRL A-6831) (Bakanae and foot rot disease fungus)).